We begin with the raw amino-acid sequence, 141 residues long: MAKKVVGEIKLQIAATKANPSPPVGPALGQQGVNIMEFCKAFNERTKDMAGFNIPVVITVYADKSFTFITKQPPATDLIKKAAGISKGTDNPLKNKVGKLTRAQVLEIVDKKIADLNTKDRDQAAKIIAGSARSMGVEIVD.

This sequence belongs to the universal ribosomal protein uL11 family. As to quaternary structure, part of the ribosomal stalk of the 50S ribosomal subunit. Interacts with L10 and the large rRNA to form the base of the stalk. L10 forms an elongated spine to which L12 dimers bind in a sequential fashion forming a multimeric L10(L12)X complex. One or more lysine residues are methylated.

Its function is as follows. Forms part of the ribosomal stalk which helps the ribosome interact with GTP-bound translation factors. The polypeptide is Large ribosomal subunit protein uL11 (Campylobacter jejuni subsp. jejuni serotype O:6 (strain 81116 / NCTC 11828)).